Here is an 868-residue protein sequence, read N- to C-terminus: Probable mixed-linked glucan synthase 3 (868 aa).

The interval 36–68 (ERKAAGGGGGGAKGKHWAAADKGERRAAKECGG) is disordered. Positions 53–68 (AAADKGERRAAKECGG) are enriched in basic and acidic residues. 2 consecutive transmembrane segments (helical) span residues 86 to 106 (LLHP…LFFG) and 116 to 136 (IMWF…SWLL). Residue aspartate 211 is part of the active site. Residues aspartate 412 and aspartate 414 each coordinate substrate. Residue aspartate 573 is part of the active site. Transmembrane regions (helical) follow at residues 649 to 669 (IYPV…MWLI), 686 to 706 (LLMI…WAGI), 717 to 737 (FFMI…VVNL), 771 to 791 (MLIP…VAIG), 809 to 829 (IMGL…ALAI), and 837 to 857 (PIIL…VYVA).

This sequence belongs to the glycosyltransferase 2 family. Plant cellulose synthase-like F subfamily.

It is found in the golgi apparatus membrane. Functionally, may catalyze both beta-1,3 and beta-1,4 glycosidic linkage on beta-D-glucan. Essential for (1,3;1,4)-beta-D-glucans synthesis in grasses and cereals (Poaceae). The mixed-linked glucans (which are not present in walls of dicotyledons or most other monocotyledonous plants) are particularly important constituents of the walls of the starchy endosperm and aleurone cells of cereal grains such as oats, wheat, rice and barley. They can account for up to 70% by weight of the wall. This is Probable mixed-linked glucan synthase 3 (CSLF3) from Oryza sativa subsp. indica (Rice).